A 471-amino-acid chain; its full sequence is MSNAKTLYEKVYDAHVAVAAKGETPILYIDRHLVHEVTSPQAFDGLREKGRNVRQVGKTFATMDHNVSTQTKDINASGEMARIQMETLSKNCEEFGVTLYDLNHKYQGIVHVMGPELGITLPGMTIVCGDSHTATHGAFGSLAFGIGTSEVEHVLATQTLKQARAKTMKIEVKGKVTEGITAKDIVLAIIGKTTAAGGTGYVVEFCGEAITDLTMEGRMTVCNMAIELGAKAGLIAPDATTFDYITGRKFSPQGEDLTAAIEYWSSLKTDDDAKFDAVVSLDASEIKPQVTWGTNPGQVIAIDQPIPAPESFSDPVEKVSAEKALAYMGLEAGKSLTDYNVDKVFVGSCTNSRIEDIRAAAAVAKGNKVAAHVQALIVPGSEQVKAQAEKEGLDIIFKEAGFEWRLPGCSMCLAMNNDRLGPQERCASTSNRNFEGRQGRDGRTHLVSPAMAAAAAIAGHFVDIRTITEKA.

[4Fe-4S] cluster contacts are provided by Cys349, Cys409, and Cys412.

The protein belongs to the aconitase/IPM isomerase family. LeuC type 1 subfamily. In terms of assembly, heterodimer of LeuC and LeuD. The cofactor is [4Fe-4S] cluster.

The catalysed reaction is (2R,3S)-3-isopropylmalate = (2S)-2-isopropylmalate. It participates in amino-acid biosynthesis; L-leucine biosynthesis; L-leucine from 3-methyl-2-oxobutanoate: step 2/4. Functionally, catalyzes the isomerization between 2-isopropylmalate and 3-isopropylmalate, via the formation of 2-isopropylmaleate. In Aliivibrio salmonicida (strain LFI1238) (Vibrio salmonicida (strain LFI1238)), this protein is 3-isopropylmalate dehydratase large subunit.